The chain runs to 293 residues: DNA repair protein RecO (293 aa).

It belongs to the RecO family.

Its function is as follows. Involved in DNA repair and RecF pathway recombination. In Acaryochloris marina (strain MBIC 11017), this protein is DNA repair protein RecO.